We begin with the raw amino-acid sequence, 344 residues long: tRNA N6-adenosine threonylcarbamoyltransferase (344 aa).

The Fe cation site is built by histidine 111 and histidine 115. Residues 134–138 (LVSGG), aspartate 167, glycine 180, and asparagine 273 contribute to the substrate site. Aspartate 301 serves as a coordination point for Fe cation.

It belongs to the KAE1 / TsaD family. Fe(2+) is required as a cofactor.

Its subcellular location is the cytoplasm. The catalysed reaction is L-threonylcarbamoyladenylate + adenosine(37) in tRNA = N(6)-L-threonylcarbamoyladenosine(37) in tRNA + AMP + H(+). Its function is as follows. Required for the formation of a threonylcarbamoyl group on adenosine at position 37 (t(6)A37) in tRNAs that read codons beginning with adenine. Is involved in the transfer of the threonylcarbamoyl moiety of threonylcarbamoyl-AMP (TC-AMP) to the N6 group of A37, together with TsaE and TsaB. TsaD likely plays a direct catalytic role in this reaction. The chain is tRNA N6-adenosine threonylcarbamoyltransferase from Cupriavidus necator (strain ATCC 17699 / DSM 428 / KCTC 22496 / NCIMB 10442 / H16 / Stanier 337) (Ralstonia eutropha).